A 229-amino-acid polypeptide reads, in one-letter code: Potassium/proton antiporter CemA (229 aa).

Helical transmembrane passes span 6 to 26 (AFIPFLYFISIVFFPWWISLC), 107 to 127 (IFHFSTNLISFVILSSYSFWG), 152 to 172 (FLILLLTDLCIGFHSPHGWEL), and 189 to 209 (ILSGLVSTFPVILDTIFKYWI).

Belongs to the CemA family.

It localises to the plastid. It is found in the chloroplast inner membrane. It catalyses the reaction K(+)(in) + H(+)(out) = K(+)(out) + H(+)(in). In terms of biological role, contributes to K(+)/H(+) antiport activity by supporting proton efflux to control proton extrusion and homeostasis in chloroplasts in a light-dependent manner to modulate photosynthesis. Prevents excessive induction of non-photochemical quenching (NPQ) under continuous-light conditions. Indirectly promotes efficient inorganic carbon uptake into chloroplasts. This is Potassium/proton antiporter CemA from Aethionema grandiflorum (Persian stone-cress).